The chain runs to 93 residues: Chaperone NapD (93 aa).

The protein belongs to the NapD family. In terms of assembly, interacts with the cytoplasmic NapA precursor.

The protein resides in the cytoplasm. Chaperone for NapA, the catalytic subunit of the periplasmic nitrate reductase. It binds directly and specifically to the twin-arginine signal peptide of NapA, preventing premature interaction with the Tat translocase and premature export. This is Chaperone NapD from Haemophilus influenzae (strain ATCC 51907 / DSM 11121 / KW20 / Rd).